A 637-amino-acid chain; its full sequence is 1,4-alpha-glucan branching enzyme GlgB (637 aa).

The active-site Nucleophile is the D307. E361 serves as the catalytic Proton donor.

This sequence belongs to the glycosyl hydrolase 13 family. GlgB subfamily. In terms of assembly, monomer.

It catalyses the reaction Transfers a segment of a (1-&gt;4)-alpha-D-glucan chain to a primary hydroxy group in a similar glucan chain.. Its pathway is glycan biosynthesis; glycogen biosynthesis. In terms of biological role, catalyzes the formation of the alpha-1,6-glucosidic linkages in glycogen by scission of a 1,4-alpha-linked oligosaccharide from growing alpha-1,4-glucan chains and the subsequent attachment of the oligosaccharide to the alpha-1,6 position. The polypeptide is 1,4-alpha-glucan branching enzyme GlgB (Oceanobacillus iheyensis (strain DSM 14371 / CIP 107618 / JCM 11309 / KCTC 3954 / HTE831)).